A 151-amino-acid polypeptide reads, in one-letter code: Protein Turandot Z (151 aa).

A signal peptide spans 1 to 23 (MSRLIHLSFVLALLACLTGTISA).

This sequence belongs to the Turandot family.

It localises to the secreted. Functionally, a humoral factor that may play a role in stress tolerance. The chain is Protein Turandot Z from Drosophila persimilis (Fruit fly).